A 329-amino-acid polypeptide reads, in one-letter code: Flotillin-like protein FloA (329 aa).

2 helical membrane passes run 4 to 24 (IAFI…FAIV) and 26 to 46 (VGLW…TLIG).

Belongs to the flotillin-like FloA family. Homooligomerizes.

The protein resides in the cell membrane. It is found in the membrane raft. Its function is as follows. Found in functional membrane microdomains (FMM) that may be equivalent to eukaryotic membrane rafts. FMMs are highly dynamic and increase in number as cells age. Flotillins are thought to be important factors in membrane fluidity. The chain is Flotillin-like protein FloA from Acetivibrio thermocellus (strain ATCC 27405 / DSM 1237 / JCM 9322 / NBRC 103400 / NCIMB 10682 / NRRL B-4536 / VPI 7372) (Clostridium thermocellum).